A 1017-amino-acid polypeptide reads, in one-letter code: Genome polyprotein (1017 aa).

The Peptidase C4 domain maps to 1-195; it reads LSVTRKQCLE…IAWGPLNLVE (195 aa). Catalysis depends on for nuclear inclusion protein A activity residues aspartate 57 and cysteine 127. Residues 461–585 form the RdRp catalytic domain; it reads WTYCHADGSQ…AVKDEDVWLY (125 aa). The span at 746-760 shows a compositional bias: basic and acidic residues; the sequence is DAGKESKKDASDKGN. The tract at residues 746-787 is disordered; that stretch reads DAGKESKKDASDKGNKPQNSQVGQGSKEPTKTGTVSKDVNVG.

It belongs to the potyviridae genome polyprotein family. Post-translationally, genome polyprotein of potyviruses undergoes post-translational proteolytic processing by the main proteinase NIa-pro resulting in the production of at least ten individual proteins. The P1 proteinase and the HC-pro cleave only their respective C-termini autocatalytically. 6K1 is essential for proper proteolytic separation of P3 from CI.

The protein resides in the virion. It catalyses the reaction Hydrolyzes glutaminyl bonds, and activity is further restricted by preferences for the amino acids in P6 - P1' that vary with the species of potyvirus, e.g. Glu-Xaa-Xaa-Tyr-Xaa-Gln-|-(Ser or Gly) for the enzyme from tobacco etch virus. The natural substrate is the viral polyprotein, but other proteins and oligopeptides containing the appropriate consensus sequence are also cleaved.. The catalysed reaction is RNA(n) + a ribonucleoside 5'-triphosphate = RNA(n+1) + diphosphate. Functionally, has RNA-binding and proteolytic activities. In terms of biological role, an RNA-dependent RNA polymerase that plays an essential role in the virus replication. Involved in aphid transmission, cell-to-cell and systemis movement, encapsidation of the viral RNA and in the regulation of viral RNA amplification. This chain is Genome polyprotein, found in Watermelon mosaic virus II (isolate USA).